Here is a 375-residue protein sequence, read N- to C-terminus: 23S rRNA (uracil(747)-C(5))-methyltransferase RlmC (375 aa).

The [4Fe-4S] cluster site is built by Cys3, Cys11, Cys14, and Cys87. Positions 212, 241, 262, and 307 each coordinate S-adenosyl-L-methionine. The Nucleophile role is filled by Cys334.

It belongs to the class I-like SAM-binding methyltransferase superfamily. RNA M5U methyltransferase family. RlmC subfamily.

The enzyme catalyses uridine(747) in 23S rRNA + S-adenosyl-L-methionine = 5-methyluridine(747) in 23S rRNA + S-adenosyl-L-homocysteine + H(+). In terms of biological role, catalyzes the formation of 5-methyl-uridine at position 747 (m5U747) in 23S rRNA. This Escherichia coli O17:K52:H18 (strain UMN026 / ExPEC) protein is 23S rRNA (uracil(747)-C(5))-methyltransferase RlmC.